Here is a 161-residue protein sequence, read N- to C-terminus: Nucleotide-binding protein Daci_4781 (161 aa).

This sequence belongs to the YajQ family.

In terms of biological role, nucleotide-binding protein. The polypeptide is Nucleotide-binding protein Daci_4781 (Delftia acidovorans (strain DSM 14801 / SPH-1)).